A 220-amino-acid polypeptide reads, in one-letter code: Outer membrane protein assembly factor BamD (220 aa).

Residues 1–22 (MRLKHFKTFLFITMAIIVIGTG) form the signal peptide. Cys-23 carries N-palmitoyl cysteine lipidation. The S-diacylglycerol cysteine moiety is linked to residue Cys-23.

The protein belongs to the BamD family. As to quaternary structure, part of the Bam complex.

It is found in the cell outer membrane. In terms of biological role, part of the outer membrane protein assembly complex, which is involved in assembly and insertion of beta-barrel proteins into the outer membrane. The chain is Outer membrane protein assembly factor BamD from Helicobacter pylori (strain ATCC 700392 / 26695) (Campylobacter pylori).